Consider the following 452-residue polypeptide: UDP-N-acetylmuramate--L-alanine ligase (452 aa).

119–125 is an ATP binding site; it reads GAHGKTS.

It belongs to the MurCDEF family.

The protein resides in the cytoplasm. The enzyme catalyses UDP-N-acetyl-alpha-D-muramate + L-alanine + ATP = UDP-N-acetyl-alpha-D-muramoyl-L-alanine + ADP + phosphate + H(+). Its pathway is cell wall biogenesis; peptidoglycan biosynthesis. Cell wall formation. The chain is UDP-N-acetylmuramate--L-alanine ligase from Streptococcus mutans serotype c (strain ATCC 700610 / UA159).